We begin with the raw amino-acid sequence, 147 residues long: Large ribosomal subunit protein uL13 (147 aa).

The interval 128-147 (DQHPHGAQQPQPFEITQVAQ) is disordered.

It belongs to the universal ribosomal protein uL13 family. In terms of assembly, part of the 50S ribosomal subunit.

Functionally, this protein is one of the early assembly proteins of the 50S ribosomal subunit, although it is not seen to bind rRNA by itself. It is important during the early stages of 50S assembly. The protein is Large ribosomal subunit protein uL13 of Streptomyces coelicolor (strain ATCC BAA-471 / A3(2) / M145).